Consider the following 242-residue polypeptide: Cysteine-rich venom protein helothermine (242 aa).

Residues 1–19 (MILLSLYLCLAAMLHQSEG) form the signal peptide. The 129-residue stretch at 41 to 169 (DKHNNLRRIV…TYKYYQVCQY (129 aa)) folds into the SCP domain. Intrachain disulfides connect cysteine 77–cysteine 155, cysteine 94–cysteine 170, cysteine 150–cysteine 167, cysteine 189–cysteine 196, cysteine 192–cysteine 201, cysteine 205–cysteine 237, cysteine 214–cysteine 231, and cysteine 223–cysteine 235. One can recognise a ShKT domain in the interval 205–237 (CKQNDVYNNCPDLKKQVGCGHPIMKDCMATCKC).

This sequence belongs to the CRISP family. As to expression, expressed by the venom gland.

It localises to the secreted. In terms of biological role, alters a variety of ion channel activities, including voltage-gated potassium channels (Kv), voltage-gated calcium channels (L-, N-, and P-type) (Cav) and ryanodine receptors (RyR). Is toxic to mice (causes lethargy, partial paralysis of rear limbs and lowering of body temperature). In Heloderma horridum horridum (Mexican beaded lizard), this protein is Cysteine-rich venom protein helothermine.